We begin with the raw amino-acid sequence, 322 residues long: Probable heme-iron transport system permease protein IsdF (322 aa).

9 consecutive transmembrane segments (helical) span residues 9–29 (LLFL…FVTG), 61–81 (ILIA…LQAA), 89–109 (ANII…MLFI), 114–134 (FYLP…IILL), 143–163 (VSMI…LEIL), 179–199 (IWSD…LTLL), 233–253 (VFLA…GIIV), 267–287 (VLIP…DLLG), and 294–314 (LEIP…IYLI).

Belongs to the binding-protein-dependent transport system permease family. FecCD subfamily.

It is found in the cell membrane. Functionally, part of the binding-protein-dependent transport system for heme-iron. Responsible for the translocation of the substrate across the membrane. The protein is Probable heme-iron transport system permease protein IsdF (isdF) of Staphylococcus aureus (strain MSSA476).